Here is a 419-residue protein sequence, read N- to C-terminus: Peptide chain release factor subunit 1 (419 aa).

Belongs to the eukaryotic release factor 1 family. In terms of assembly, heterodimer of two subunits, one of which binds GTP.

The protein resides in the cytoplasm. In terms of biological role, directs the termination of nascent peptide synthesis (translation) in response to the termination codons UAA, UAG and UGA. This is Peptide chain release factor subunit 1 from Methanococcus maripaludis (strain C5 / ATCC BAA-1333).